We begin with the raw amino-acid sequence, 394 residues long: Elongation factor Tu (394 aa).

One can recognise a tr-type G domain in the interval 10–204 (KPHINVGTIG…SLDKYIPIPV (195 aa)). The tract at residues 19-26 (GHVDHGKT) is G1. 19–26 (GHVDHGKT) is a GTP binding site. Position 26 (threonine 26) interacts with Mg(2+). Residues 60-64 (GITIN) are G2. The segment at 81 to 84 (DCPG) is G3. GTP contacts are provided by residues 81–85 (DCPGH) and 136–139 (NKCD). Residues 136 to 139 (NKCD) are G4. Residues 174–176 (SAL) are G5.

The protein belongs to the TRAFAC class translation factor GTPase superfamily. Classic translation factor GTPase family. EF-Tu/EF-1A subfamily. In terms of assembly, monomer.

It localises to the cytoplasm. It catalyses the reaction GTP + H2O = GDP + phosphate + H(+). GTP hydrolase that promotes the GTP-dependent binding of aminoacyl-tRNA to the A-site of ribosomes during protein biosynthesis. This Buchnera aphidicola subsp. Cinara cedri (strain Cc) protein is Elongation factor Tu.